Reading from the N-terminus, the 411-residue chain is Secretion apparatus protein BsaZ (411 aa).

Helical transmembrane passes span 28-48, 80-100, 137-157, and 175-195; these read IVAL…VDLT, IAAP…LVQS, ALLY…LYHA, and IVLT…VLIL. The disordered stretch occupies residues 341–411; it reads AANRGGPPPE…APARTGDQNA (71 aa). Residues 370–404 show a composition bias toward low complexity; the sequence is DACADNAFPDDAPPGAAAPNAGSPDGPAPDGGAPA.

This sequence belongs to the type III secretion exporter family.

The protein resides in the cell membrane. Part of the bsa type III secretion system, is involved in the intracellular replication of invading bacteria inside the host cell. Probably necessary for the lysis of the vacuole membrane and escape into the host cell cytoplasm. This Burkholderia pseudomallei (strain 1026b) protein is Secretion apparatus protein BsaZ (bsaZ).